A 469-amino-acid polypeptide reads, in one-letter code: Probable monogalactosyldiacylglycerol synthase 2, chloroplastic (469 aa).

Residues 1–42 (MVISVATPRRSIRDAVLGGVLGAGGRQLYQPLRCAFYDGAAG) constitute a chloroplast transit peptide.

Belongs to the glycosyltransferase 28 family.

It is found in the plastid. Its subcellular location is the chloroplast membrane. It catalyses the reaction a 1,2-diacyl-sn-glycerol + UDP-alpha-D-galactose = a 1,2-diacyl-3-O-(beta-D-galactosyl)-sn-glycerol + UDP + H(+). Functionally, involved in the synthesis of the major structural component of photosynthetic membranes. This Oryza sativa subsp. japonica (Rice) protein is Probable monogalactosyldiacylglycerol synthase 2, chloroplastic (MGD2).